Consider the following 275-residue polypeptide: Vitamin B12-binding protein (275 aa).

Residues 1–27 form the signal peptide; it reads MKWIKSTGSIGLSLLLFLSSFSHSLYA. A Fe/B12 periplasmic-binding domain is found at 31–275; it reads RVISLSPSTT…LCQQLNDNGS (245 aa). Tyr58 contributes to the cyanocob(III)alamin binding site. A disulfide bridge connects residues Cys191 and Cys267.

This sequence belongs to the BtuF family. The complex is composed of two ATP-binding proteins (BtuD), two transmembrane proteins (BtuC) and a solute-binding protein (BtuF).

Its subcellular location is the periplasm. Functionally, part of the ABC transporter complex BtuCDF involved in vitamin B12 import. Binds vitamin B12 and delivers it to the periplasmic surface of BtuC. This Photorhabdus laumondii subsp. laumondii (strain DSM 15139 / CIP 105565 / TT01) (Photorhabdus luminescens subsp. laumondii) protein is Vitamin B12-binding protein.